The chain runs to 309 residues: Glutaminase (309 aa).

Positions 64, 114, 160, 167, 191, 243, and 261 each coordinate substrate.

It belongs to the glutaminase family. In terms of assembly, homotetramer.

It carries out the reaction L-glutamine + H2O = L-glutamate + NH4(+). This is Glutaminase from Rhizobium leguminosarum bv. trifolii (strain WSM2304).